Here is a 296-residue protein sequence, read N- to C-terminus: Probable redox regulatory protein BQ2027_MB0506C (296 aa).

This sequence belongs to the Rv0495c family.

Functionally, essential for maintaining intracellular redox homeostasis. The chain is Probable redox regulatory protein BQ2027_MB0506C from Mycobacterium bovis (strain ATCC BAA-935 / AF2122/97).